The sequence spans 64 residues: Large ribosomal subunit protein bL35 (64 aa).

This sequence belongs to the bacterial ribosomal protein bL35 family.

The polypeptide is Large ribosomal subunit protein bL35 (Acinetobacter baumannii (strain AB307-0294)).